A 324-amino-acid chain; its full sequence is Aquaporin-4 (324 aa).

Residues 1-36 (MSDRPAARPWGKCGSLCRREEIMVAFKGVWTQAFWK) are Cytoplasmic-facing. 2 S-palmitoyl cysteine lipidation sites follow: Cys-13 and Cys-17. A helical transmembrane segment spans residues 37-57 (AVTAEFLAMLIFVLLSLGSTI). At 58-69 (NWGGKENPLPVD) the chain is on the extracellular side. Residues 70-89 (MVLISLCFGLSIATMVQCFG) form a helical membrane-spanning segment. The Cytoplasmic portion of the chain corresponds to 90–93 (HISG). The discontinuously helical intramembrane region spans 94–101 (GHINPAVT). The short motif at 97–99 (NPA) is the NPA 1 element. The Cytoplasmic portion of the chain corresponds to 102–115 (VAMVCTRKISIAKS). Ser-111 bears the Phosphoserine; by PKG mark. A helical transmembrane segment spans residues 116 to 136 (VFYIAAQCLGAIIGAGILYLV). Over 137–155 (TPPSVVGGLGVTTVHGNLT) the chain is Extracellular. The N-linked (GlcNAc...) asparagine glycan is linked to Asn-153. A helical transmembrane segment spans residues 156–176 (AGHGLLVELIITFQLVFTIFA). Topologically, residues 177–184 (SCDSKRTD) are cytoplasmic. Ser-180 carries the phosphoserine; by PKC modification. The chain crosses the membrane as a helical span at residues 185–205 (VTGSIALAIGFSVAIGHLFAI). Asn-206 is a glycosylation site (N-linked (GlcNAc...) asparagine). The Extracellular portion of the chain corresponds to 206–208 (NYT). An intramembrane region (discontinuously helical) is located at residues 209 to 222 (GASMNPARSFGPAV). Positions 213 to 215 (NPA) match the NPA 2 motif. The Extracellular portion of the chain corresponds to 223–231 (IMGNWENHW). A helical membrane pass occupies residues 232-252 (IYWVGPIIGAVLAGGLYEYVF). The Cytoplasmic portion of the chain corresponds to 253-324 (CPDVELKRRF…PSGEIAQTQH (72 aa)). 2 positions are modified to phosphoserine: Ser-276 and Ser-285. Thr-289 bears the Phosphothreonine mark. The segment covering 305–316 (DRGDEKKGKDPS) has biased composition (basic and acidic residues). The tract at residues 305-324 (DRGDEKKGKDPSGEIAQTQH) is disordered.

The protein belongs to the MIP/aquaporin (TC 1.A.8) family. In terms of assembly, homotetramer. The tetramers can form oligomeric arrays in membranes. The size of the oligomers differs between tissues and is smaller in skeletal muscle than in brain. Interaction between AQP4 oligomeric arrays in close-by cells can contribute to cell-cell adhesion. Part of a complex containing MLC1, TRPV4, HEPACAM and ATP1B1. Post-translationally, phosphorylation by PKC at Ser-180 reduces conductance by 50%. Phosphorylation by PKG at Ser-111 in response to glutamate increases conductance by 40%. Isoform 2: Palmitoylated on its N-terminal region. Isoform 1: Not palmitoylated. Not expressed in kidney, Detectable in gastric parietal and brain astroglial cells. The absence of AQP4 in kidney may be critical for the extreme urinary concentration that occurs in this species (up to 5,000 mosmol/kg H(2)O).

The protein resides in the cell membrane. It is found in the basolateral cell membrane. Its subcellular location is the endosome membrane. It localises to the sarcolemma. The protein localises to the cell projection. The catalysed reaction is H2O(in) = H2O(out). Its function is as follows. Forms a water-specific channel. Plays an important role in brain water homeostasis and in glymphatic solute transport. Required for a normal rate of water exchange across the blood brain interface. Required for normal levels of cerebrospinal fluid influx into the brain cortex and parenchyma along paravascular spaces that surround penetrating arteries, and for normal drainage of interstitial fluid along paravenous drainage pathways. Thereby, it is required for normal clearance of solutes from the brain interstitial fluid, including soluble beta-amyloid peptides derived from APP. Plays a redundant role in urinary water homeostasis and urinary concentrating ability. This is Aquaporin-4 (AQP4) from Dipodomys merriami (Merriam's kangaroo rat).